Here is a 462-residue protein sequence, read N- to C-terminus: F-box/LRR-repeat protein At5g38396 (462 aa).

Residues 1–47 enclose the F-box domain; the sequence is MDLLRNIPDELICHILSFLTTKEAALTSVLSKRWRNLLAFVSNLHID. LRR repeat units lie at residues 118–146, 148–175, 197–222, 302–333, and 334–359; these read SIDL…KLHR, CIGQ…ELDY, VDAF…TMSS, CLDL…SIKS, and AENR…VLEG.

This Arabidopsis thaliana (Mouse-ear cress) protein is F-box/LRR-repeat protein At5g38396.